The sequence spans 127 residues: Translation initiation factor 5A (127 aa).

A Hypusine modification is found at Lys36.

It belongs to the eIF-5A family.

The protein resides in the cytoplasm. Functionally, functions by promoting the formation of the first peptide bond. This is Translation initiation factor 5A (eif5a) from Halobacterium salinarum (strain ATCC 700922 / JCM 11081 / NRC-1) (Halobacterium halobium).